The following is a 371-amino-acid chain: DNA-directed RNA polymerase subunit alpha (371 aa).

The alpha N-terminal domain (alpha-NTD) stretch occupies residues 1 to 248; sequence MSVKYGKFEM…KHFEVFNQFN (248 aa). Residues 264–371 are alpha C-terminal domain (alpha-CTD); the sequence is DQDELMDKLS…KELVKHEDAK (108 aa).

The protein belongs to the RNA polymerase alpha chain family. Homodimer. The RNAP catalytic core consists of 2 alpha, 1 beta, 1 beta' and 1 omega subunit. When a sigma factor is associated with the core the holoenzyme is formed, which can initiate transcription.

The catalysed reaction is RNA(n) + a ribonucleoside 5'-triphosphate = RNA(n+1) + diphosphate. DNA-dependent RNA polymerase catalyzes the transcription of DNA into RNA using the four ribonucleoside triphosphates as substrates. This chain is DNA-directed RNA polymerase subunit alpha, found in Protochlamydia amoebophila (strain UWE25).